A 184-amino-acid polypeptide reads, in one-letter code: Guanylate kinase (184 aa).

One can recognise a Guanylate kinase-like domain in the interval 5–183 (NGLIVITGPS…ALLEIKKLIK (179 aa)). 12–19 (GPSGVGKG) provides a ligand contact to ATP.

The protein belongs to the guanylate kinase family.

It localises to the cytoplasm. It carries out the reaction GMP + ATP = GDP + ADP. In terms of biological role, essential for recycling GMP and indirectly, cGMP. In Prochlorococcus marinus (strain SARG / CCMP1375 / SS120), this protein is Guanylate kinase.